We begin with the raw amino-acid sequence, 397 residues long: 2-acyl-1-lysophosphatidylinositol acyltransferase (397 aa).

The short motif at 112-117 (HQIYTD) is the HXXXXD motif element.

The protein belongs to the 1-acyl-sn-glycerol-3-phosphate acyltransferase family.

It is found in the lipid droplet. It catalyses the reaction 1-heptadecanoyl-sn-glycero-3-phosphate + octadecanoyl-CoA = 1-heptadecanoyl-2-octadecanoyl-sn-glycero-3-phosphate + CoA. It carries out the reaction 1-heptadecanoyl-sn-glycero-3-phosphate + tetradecanoyl-CoA = 1-heptadecanoyl-2-tetradecanoyl-sn-glycero-3-phosphate + CoA. The enzyme catalyses 1-heptadecanoyl-sn-glycero-3-phosphate + hexadecanoyl-CoA = 1-heptadecanoyl-2-hexadecanoyl-sn-glycero-3-phosphate + CoA. Functionally, acyltransferase with lysophosphatidic acid acyltransferase (LPAAT) activity. Fatty acyl substrates include 18:0-acyl-CoA, 16:0-acyl-CoA, 17:0-acyl-CoA and 14:0-acyl-CoA. Responsible for the acyl-CoA-dependent introduction of saturated very long chain fatty acids (VLCFAs) into phosphatidylinositol, transferring saturated FAs with 18 to 26 carbon atoms. Responsible for the incorporation of stearate into phosphatidylinositol. Overexpression has an effect on chromosome stability. Regulates phosphorylation and expression of glycerol-3-phosphate acyltransferase SCT1. The sequence is that of 2-acyl-1-lysophosphatidylinositol acyltransferase from Saccharomyces cerevisiae (strain ATCC 204508 / S288c) (Baker's yeast).